A 190-amino-acid polypeptide reads, in one-letter code: Elongation factor P 2 (190 aa).

Belongs to the elongation factor P family.

It is found in the cytoplasm. It functions in the pathway protein biosynthesis; polypeptide chain elongation. Its function is as follows. Involved in peptide bond synthesis. Stimulates efficient translation and peptide-bond synthesis on native or reconstituted 70S ribosomes in vitro. Probably functions indirectly by altering the affinity of the ribosome for aminoacyl-tRNA, thus increasing their reactivity as acceptors for peptidyl transferase. The protein is Elongation factor P 2 (efp2) of Chlamydia trachomatis serovar D (strain ATCC VR-885 / DSM 19411 / UW-3/Cx).